Here is a 140-residue protein sequence, read N- to C-terminus: Large-conductance mechanosensitive channel (140 aa).

2 consecutive transmembrane segments (helical) span residues 21–41 (VGVIIGGAFGKIVESLVGDVI) and 82–102 (GSFITVAINFMILAFIIFMMI).

Belongs to the MscL family. As to quaternary structure, homopentamer.

It is found in the cell inner membrane. In terms of biological role, channel that opens in response to stretch forces in the membrane lipid bilayer. May participate in the regulation of osmotic pressure changes within the cell. This Leptothrix cholodnii (strain ATCC 51168 / LMG 8142 / SP-6) (Leptothrix discophora (strain SP-6)) protein is Large-conductance mechanosensitive channel.